Reading from the N-terminus, the 1028-residue chain is Protein SMAX1-LIKE 5 (1028 aa).

In terms of domain architecture, Clp R spans 8 to 199 (IQQTLTTEAA…CVEDCSVSSV (192 aa)). Repeat stretches follow at residues 12 to 102 (LTTE…LNRL) and 116 to 199 (LANA…VSSV). The short motif at 871–875 (LDLNI) is the EAR element.

Belongs to the ClpA/ClpB family. As to quaternary structure, interacts probably with TPL/TPR in an EAR-motif dependent manner. Detected in roots, seedlings and axillary branches.

May function in a transcriptional corepressor complex. This is Protein SMAX1-LIKE 5 from Arabidopsis thaliana (Mouse-ear cress).